The chain runs to 528 residues: Phosphoenolpyruvate carboxykinase (ATP) (528 aa).

Substrate contacts are provided by Arg56, Tyr192, and Lys198. ATP-binding positions include Lys198, His217, and 233–241 (GLSGTGKTT). Residues Lys198 and His217 each contribute to the Mn(2+) site. Asp254 contacts Mn(2+). ATP contacts are provided by Glu282, Arg319, and Thr444. Residue Arg319 participates in substrate binding.

The protein belongs to the phosphoenolpyruvate carboxykinase (ATP) family. The cofactor is Mn(2+).

The protein localises to the cytoplasm. It carries out the reaction oxaloacetate + ATP = phosphoenolpyruvate + ADP + CO2. The protein operates within carbohydrate biosynthesis; gluconeogenesis. Its function is as follows. Involved in the gluconeogenesis. Catalyzes the conversion of oxaloacetate (OAA) to phosphoenolpyruvate (PEP) through direct phosphoryl transfer between the nucleoside triphosphate and OAA. This is Phosphoenolpyruvate carboxykinase (ATP) from Bacillus cereus (strain ATCC 10987 / NRS 248).